The following is a 361-amino-acid chain: tRNA-specific 2-thiouridylase MnmA (361 aa).

Residues 8–15 (GMSGGVDS) and Met34 contribute to the ATP site. Residues 94–96 (NPD) form an interaction with target base in tRNA region. The active-site Nucleophile is Cys99. Cys99 and Cys195 are oxidised to a cystine. Gly123 contributes to the ATP binding site. The interaction with tRNA stretch occupies residues 145 to 147 (KDQ). The active-site Cysteine persulfide intermediate is Cys195. An interaction with tRNA region spans residues 307–308 (RY).

This sequence belongs to the MnmA/TRMU family.

The protein resides in the cytoplasm. The enzyme catalyses S-sulfanyl-L-cysteinyl-[protein] + uridine(34) in tRNA + AH2 + ATP = 2-thiouridine(34) in tRNA + L-cysteinyl-[protein] + A + AMP + diphosphate + H(+). Its function is as follows. Catalyzes the 2-thiolation of uridine at the wobble position (U34) of tRNA, leading to the formation of s(2)U34. In Legionella pneumophila (strain Lens), this protein is tRNA-specific 2-thiouridylase MnmA.